A 356-amino-acid chain; its full sequence is UDP-N-acetylglucosamine--N-acetylmuramyl-(pentapeptide) pyrophosphoryl-undecaprenol N-acetylglucosamine transferase (356 aa).

Residues arginine 166, serine 196, and glutamine 290 each contribute to the UDP-N-acetyl-alpha-D-glucosamine site.

Belongs to the glycosyltransferase 28 family. MurG subfamily.

It is found in the cell membrane. It carries out the reaction Mur2Ac(oyl-L-Ala-gamma-D-Glu-L-Lys-D-Ala-D-Ala)-di-trans,octa-cis-undecaprenyl diphosphate + UDP-N-acetyl-alpha-D-glucosamine = beta-D-GlcNAc-(1-&gt;4)-Mur2Ac(oyl-L-Ala-gamma-D-Glu-L-Lys-D-Ala-D-Ala)-di-trans,octa-cis-undecaprenyl diphosphate + UDP + H(+). It participates in cell wall biogenesis; peptidoglycan biosynthesis. Cell wall formation. Catalyzes the transfer of a GlcNAc subunit on undecaprenyl-pyrophosphoryl-MurNAc-pentapeptide (lipid intermediate I) to form undecaprenyl-pyrophosphoryl-MurNAc-(pentapeptide)GlcNAc (lipid intermediate II). This Staphylococcus aureus (strain Mu3 / ATCC 700698) protein is UDP-N-acetylglucosamine--N-acetylmuramyl-(pentapeptide) pyrophosphoryl-undecaprenol N-acetylglucosamine transferase.